We begin with the raw amino-acid sequence, 377 residues long: N-acetyldiaminopimelate deacetylase (377 aa).

Residue aspartate 70 is part of the active site. Glutamate 129 functions as the Proton acceptor in the catalytic mechanism.

Belongs to the peptidase M20A family. N-acetyldiaminopimelate deacetylase subfamily.

The catalysed reaction is N-acetyl-(2S,6S)-2,6-diaminopimelate + H2O = (2S,6S)-2,6-diaminopimelate + acetate. It functions in the pathway amino-acid biosynthesis; L-lysine biosynthesis via DAP pathway; LL-2,6-diaminopimelate from (S)-tetrahydrodipicolinate (acetylase route): step 3/3. Functionally, catalyzes the conversion of N-acetyl-diaminopimelate to diaminopimelate and acetate. In Streptococcus thermophilus (strain ATCC BAA-491 / LMD-9), this protein is N-acetyldiaminopimelate deacetylase.